An 84-amino-acid polypeptide reads, in one-letter code: uncharacterized protein (84 aa).

Its function is as follows. This protein may be involved in virus assembly. This is an uncharacterized protein from Saccharolobus solfataricus (Sulfolobus solfataricus).